The following is a 275-amino-acid chain: Polyamine aminopropyltransferase (275 aa).

The PABS domain maps to 2–235 (ELWFTEKQTK…GLWTFTIGSK (234 aa)). Q31 contributes to the S-methyl-5'-thioadenosine binding site. Spermidine-binding residues include H62 and D86. Residues E106 and 137–138 (DG) contribute to the S-methyl-5'-thioadenosine site. D155 acts as the Proton acceptor in catalysis. 155 to 158 (DSTE) is a binding site for spermidine. P162 lines the S-methyl-5'-thioadenosine pocket.

This sequence belongs to the spermidine/spermine synthase family. In terms of assembly, homodimer or homotetramer.

It is found in the cytoplasm. The catalysed reaction is S-adenosyl 3-(methylsulfanyl)propylamine + putrescine = S-methyl-5'-thioadenosine + spermidine + H(+). It functions in the pathway amine and polyamine biosynthesis; spermidine biosynthesis; spermidine from putrescine: step 1/1. Catalyzes the irreversible transfer of a propylamine group from the amino donor S-adenosylmethioninamine (decarboxy-AdoMet) to putrescine (1,4-diaminobutane) to yield spermidine. The chain is Polyamine aminopropyltransferase from Bacillus mycoides (strain KBAB4) (Bacillus weihenstephanensis).